Here is a 396-residue protein sequence, read N- to C-terminus: Ribosomal RNA large subunit methyltransferase I (396 aa).

The 80-residue stretch at 2-81 folds into the PUA domain; the sequence is SVRLVLAKGR…ESIDIAFFTR (80 aa).

It belongs to the methyltransferase superfamily. RlmI family.

It is found in the cytoplasm. It carries out the reaction cytidine(1962) in 23S rRNA + S-adenosyl-L-methionine = 5-methylcytidine(1962) in 23S rRNA + S-adenosyl-L-homocysteine + H(+). Functionally, specifically methylates the cytosine at position 1962 (m5C1962) of 23S rRNA. The polypeptide is Ribosomal RNA large subunit methyltransferase I (Escherichia coli O1:K1 / APEC).